A 222-amino-acid chain; its full sequence is Peptide methionine sulfoxide reductase MsrA (222 aa).

The active site involves C60.

Belongs to the MsrA Met sulfoxide reductase family.

It carries out the reaction L-methionyl-[protein] + [thioredoxin]-disulfide + H2O = L-methionyl-(S)-S-oxide-[protein] + [thioredoxin]-dithiol. The catalysed reaction is [thioredoxin]-disulfide + L-methionine + H2O = L-methionine (S)-S-oxide + [thioredoxin]-dithiol. Functionally, has an important function as a repair enzyme for proteins that have been inactivated by oxidation. Catalyzes the reversible oxidation-reduction of methionine sulfoxide in proteins to methionine. This is Peptide methionine sulfoxide reductase MsrA from Pseudomonas putida (strain GB-1).